A 128-amino-acid chain; its full sequence is Otoraplin (128 aa).

The signal sequence occupies residues 1–18 (MARILILLLGGLVVLCAG). Disulfide bonds link cysteine 32-cysteine 37 and cysteine 55-cysteine 127. The SH3 domain occupies 39-110 (YTISLARAQE…PSNLVKEQRV (72 aa)).

The protein belongs to the MIA/OTOR family. As to expression, highly expressed in cochlea.

Its subcellular location is the secreted. The chain is Otoraplin (Otor) from Mus musculus (Mouse).